Reading from the N-terminus, the 30-residue chain is Hainantoxin F6-34.84 (30 aa).

Intrachain disulfides connect cysteine 2–cysteine 15 and cysteine 9–cysteine 24.

The protein belongs to the AVIT (prokineticin) family. In terms of tissue distribution, expressed by the venom gland.

It is found in the secreted. The protein is Hainantoxin F6-34.84 of Cyriopagopus hainanus (Chinese bird spider).